We begin with the raw amino-acid sequence, 342 residues long: P2Y purinoceptor 12 (342 aa).

The Extracellular segment spans residues 1–27 (MQAVDNLTSAPGNTSLCTRDYKITQVL). Residues asparagine 6 and asparagine 13 are each glycosylated (N-linked (GlcNAc...) asparagine). Cystine bridges form between cysteine 17–cysteine 270 and cysteine 97–cysteine 175. A helical membrane pass occupies residues 28–50 (FPLLYTVLFFVGLITNGLAMRIF). The Cytoplasmic portion of the chain corresponds to 51-61 (FQIRSKSNFII). Phosphoserine occurs at positions 55 and 57. The helical transmembrane segment at 62–82 (FLKNTVISDLLMILTFPFKIL) threads the bilayer. Residues 83–97 (SDAKLGTGPLRTFVC) lie on the Extracellular side of the membrane. Arginine 93, cysteine 97, and tyrosine 105 together coordinate ADP. The chain crosses the membrane as a helical span at residues 98–118 (QVTSVIFYFTMYISISFLGLI). The Cytoplasmic portion of the chain corresponds to 119-142 (TIDRYQKTTRPFKTSNPKNLLGAK). A helical transmembrane segment spans residues 143-162 (ILSVVIWAFMFLLSLPNMIL). ADP is bound by residues 156–159 (SLPN), 175–179 (CSFLK), histidine 187, and asparagine 191. The Extracellular segment spans residues 163-185 (TNRQPRDKNVKKCSFLKSEFGLV). The helical transmembrane segment at 186–207 (WHEIVNYICQVIFWINFLIVIV) threads the bilayer. Residues 208–233 (CYTLITKELYRSYVRTRGVGKVPRKK) are Cytoplasmic-facing. Residues 234–259 (VNVKVFIIIAVFFICFVPFHFARIPY) form a helical membrane-spanning segment. Residues 256 to 259 (RIPY), glutamine 263, and lysine 280 contribute to the ADP site. Over 260–278 (TLSQTRDVFDCTAENTLFY) the chain is Extracellular. The helical transmembrane segment at 279 to 298 (VKESTLWLTSLNACLDPFIY) threads the bilayer. The Cytoplasmic segment spans residues 299 to 342 (FFLCKSFRNSLISMLKCPNSATSLSQDNRKKEQDGGDPNEETPM). Positions 319-342 (ATSLSQDNRKKEQDGGDPNEETPM) are disordered. The segment covering 333-342 (GGDPNEETPM) has biased composition (acidic residues).

Belongs to the G-protein coupled receptor 1 family. Highly expressed in the platelets, lower levels in the brain. Lowest levels in the lung, appendix, pituitary and adrenal gland. Expressed in the spinal cord and in the fetal brain.

Its subcellular location is the cell membrane. Functionally, receptor for ADP and ATP coupled to G-proteins that inhibit the adenylyl cyclase second messenger system. Not activated by UDP and UTP. Required for normal platelet aggregation and blood coagulation. The polypeptide is P2Y purinoceptor 12 (P2RY12) (Homo sapiens (Human)).